The primary structure comprises 333 residues: Probable tRNA pseudouridine synthase B (333 aa).

Aspartate 66 (nucleophile) is an active-site residue. Residues 233-308 enclose the PUA domain; that stretch reads LKKIIVKDSA…EVVEITRVIM (76 aa).

The protein belongs to the pseudouridine synthase TruB family. Type 2 subfamily.

The catalysed reaction is uridine(55) in tRNA = pseudouridine(55) in tRNA. Its function is as follows. Could be responsible for synthesis of pseudouridine from uracil-55 in the psi GC loop of transfer RNAs. The protein is Probable tRNA pseudouridine synthase B of Methanococcus maripaludis (strain C5 / ATCC BAA-1333).